We begin with the raw amino-acid sequence, 220 residues long: Small ribosomal subunit protein uS3 (220 aa).

A KH type-2 domain is found at 24-93 (IKEFLEYRLS…NPQIDVIDVS (70 aa)).

It belongs to the universal ribosomal protein uS3 family. In terms of assembly, part of the 30S ribosomal subunit.

Binds the lower part of the 30S subunit head. This chain is Small ribosomal subunit protein uS3, found in Pyrobaculum arsenaticum (strain DSM 13514 / JCM 11321 / PZ6).